A 222-amino-acid chain; its full sequence is Protein-L-isoaspartate O-methyltransferase (222 aa).

Residue serine 69 is part of the active site.

The protein belongs to the methyltransferase superfamily. L-isoaspartyl/D-aspartyl protein methyltransferase family.

It is found in the cytoplasm. The enzyme catalyses [protein]-L-isoaspartate + S-adenosyl-L-methionine = [protein]-L-isoaspartate alpha-methyl ester + S-adenosyl-L-homocysteine. Its function is as follows. Catalyzes the methyl esterification of L-isoaspartyl residues in peptides and proteins that result from spontaneous decomposition of normal L-aspartyl and L-asparaginyl residues. It plays a role in the repair and/or degradation of damaged proteins. In Nitrosomonas europaea (strain ATCC 19718 / CIP 103999 / KCTC 2705 / NBRC 14298), this protein is Protein-L-isoaspartate O-methyltransferase.